We begin with the raw amino-acid sequence, 350 residues long: Selenide, water dikinase (350 aa).

The active site involves C17. ATP-binding positions include K20 and L48–D50. Residue D51 coordinates Mg(2+). Residues D68, D91, and G139–S141 contribute to the ATP site. D91 serves as a coordination point for Mg(2+). D229 contacts Mg(2+).

The protein belongs to the selenophosphate synthase 1 family. Class I subfamily. As to quaternary structure, homodimer. The cofactor is Mg(2+).

The catalysed reaction is hydrogenselenide + ATP + H2O = selenophosphate + AMP + phosphate + 2 H(+). Functionally, synthesizes selenophosphate from selenide and ATP. This Bdellovibrio bacteriovorus (strain ATCC 15356 / DSM 50701 / NCIMB 9529 / HD100) protein is Selenide, water dikinase.